A 111-amino-acid chain; its full sequence is MAVKIRLARGGAKKRPFYRVVVANATAPRDGDFLEKVGTYDPMLALDNSERVVLKKDRIEYWLGTGAKPTERVAKFIEQAGVTLPEKVKKEMEVKAKNRKARPSKKEDKEA.

Residues M92–A111 are disordered.

Belongs to the bacterial ribosomal protein bS16 family.

In Rickettsia massiliae (strain Mtu5), this protein is Small ribosomal subunit protein bS16.